The following is a 525-amino-acid chain: M-phase inducer phosphatase 1 (525 aa).

Residues 1 to 42 (MELGPEPPHRRRLLFTCSPTPAPQPTGKVQFGASRAGGLSPV) form a disordered region. Residues 74–84 (MGSSESTDSGF) carry the Phosphodegron motif. S76 is modified (phosphoserine; by CHEK1). Phosphoserine; by NEK11 is present on residues S79, S82, and S88. The residue at position 124 (S124) is a Phosphoserine; by CHEK1 and CHEK2. The KEN box motif lies at 141-143 (KEN). S178 carries the phosphoserine; by CHEK1 modification. The interval 260–318 (FDSPSPCSSTSSCSTRAVKRADRSHEESPRGTKRRKSSEASPVKADVPEPTQLPHQSLS) is disordered. Low complexity predominate over residues 262-274 (SPSPCSSTSSCST). A compositionally biased stretch (basic and acidic residues) spans 278 to 289 (KRADRSHEESPR). Residues S283 and S296 each carry the phosphoserine; by CHEK1 and CHEK2 modification. The region spanning 377–483 (LIKEFVIIDC…FFLKCQSHCE (107 aa)) is the Rhodanese domain. C432 is an active-site residue. A Phosphothreonine; by CHEK1 modification is found at T508. Residues S514 and S520 each carry the phosphoserine; by PLK3 modification.

Belongs to the MPI phosphatase family. As to quaternary structure, interacts with CCNB1/cyclin B1. Interacts with YWHAE/14-3-3 epsilon when phosphorylated. Interacts with CUL1 specifically when CUL1 is neddylated and active. Interacts with BTRC/BTRCP1 and FBXW11/BTRCP2. Interactions with CUL1, BTRC and FBXW11 are enhanced upon DNA damage. Interacts with CHEK2; mediates CDC25A phosphorylation and degradation in response to infrared-induced DNA damages. Interacts with HSP90AB1; prevents heat shock-mediated CDC25A degradation and contributes to cell cycle progression. In terms of processing, phosphorylated by CHEK1 on Ser-76, Ser-124, Ser-178, Ser-283, Ser-296 and Thr-508 during checkpoint mediated cell cycle arrest. Also phosphorylated by CHEK2 on Ser-124, Ser-283, and Ser-296 during checkpoint mediated cell cycle arrest. Phosphorylation on Ser-178 and Thr-508 creates binding sites for YWHAE/14-3-3 epsilon which inhibits CDC25A. Phosphorylation on Ser-76, Ser-124, Ser-178, Ser-283 and Ser-296 may also promote ubiquitin-dependent proteolysis of CDC25A by the SCF complex. Phosphorylation of CDC25A at Ser-76 by CHEK1 primes it for subsequent phosphorylation at Ser-79, Ser-82 and Ser-88 by NEK11. Phosphorylation by NEK11 is required for BTRC-mediated polyubiquitination and degradation. Phosphorylation by PIM1 leads to an increase in phosphatase activity. Phosphorylated by PLK3 following DNA damage, leading to promote its ubiquitination and degradation. Post-translationally, ubiquitinated by the anaphase promoting complex/cyclosome (APC/C) ubiquitin ligase complex that contains FZR1/CDH1 during G1 phase leading to its degradation by the proteasome. Ubiquitinated by a SCF complex containing BTRC and FBXW11 during S phase leading to its degradation by the proteasome. Deubiquitination by USP17L2/DUB3 leads to its stabilization.

It catalyses the reaction O-phospho-L-tyrosyl-[protein] + H2O = L-tyrosyl-[protein] + phosphate. With respect to regulation, stimulated by B-type cyclins. Stimulated by PIM1-mediated phosphorylation. Its function is as follows. Tyrosine protein phosphatase which functions as a dosage-dependent inducer of mitotic progression. Directly dephosphorylates CDK1 and stimulates its kinase activity. Also dephosphorylates CDK2 in complex with cyclin-E, in vitro. The polypeptide is M-phase inducer phosphatase 1 (Cdc25a) (Rattus norvegicus (Rat)).